We begin with the raw amino-acid sequence, 2871 residues long: Fibrillin-1 (2871 aa).

Residues 1 to 24 (MRRGRLLEIALGFTVLLASYTSHG) form the signal peptide. A propeptide spanning residues 25-44 (ADANLEAGNVKETRASRAKR) is cleaved from the precursor. Positions 45–81 (RGGGGHDALKGPNVCGSRYNAYCCPGWKTLPGGNQCI) are fibrillin unique N-terminal (FUN) domain. An N-terminal domain region spans residues 45-450 (RGGGGHDALK…PPRVLPVNVT (406 aa)). 11 disulfides stabilise this stretch: cysteine 59–cysteine 68, cysteine 67–cysteine 80, cysteine 85–cysteine 94, cysteine 89–cysteine 100, cysteine 102–cysteine 111, cysteine 119–cysteine 129, cysteine 123–cysteine 134, cysteine 136–cysteine 145, cysteine 150–cysteine 160, cysteine 154–cysteine 166, and cysteine 168–cysteine 177. EGF-like domains are found at residues 81–112 (IVPI…PSCG), 115–146 (SIQH…THCG), and 147–178 (QPVC…PQCE). The segment at 119 to 329 (CNIRCMNGGS…YTSPDGTRCI (211 aa)) is interaction with MFAP4. Residues 184–236 (GPCFTVISNQMCQGQLSGIVCTKTLCCATVGRAWGHPCEMCPAQPHPCRRGFI) enclose the TB 1 domain. The interval 195 to 221 (CQGQLSGIVCTKTLCCATVGRAWGHPC) is hybrid domain 1. The EGF-like 4; calcium-binding domain occupies 246–287 (DVDECQAIPGLCQGGNCINTVGSFECKCPAGHKLNEVSQKCE). Cystine bridges form between cysteine 250/cysteine 262, cysteine 257/cysteine 271, cysteine 273/cysteine 286, cysteine 292/cysteine 304, cysteine 299/cysteine 313, and cysteine 315/cysteine 328. A glycan (O-linked (Glc) serine) is linked at serine 268. Positions 288–329 (DIDECSTIPGICEGGECTNTVSSYFCKCPPGFYTSPDGTRCI) constitute an EGF-like 5; calcium-binding domain. Residues 334–389 (GYCYTALTNGRCSNQLPQSITKMQCCCDAGRCWSPGVTVAPEMCPIRATEDFNKLC) form the TB 2 domain. Asparagine 448 is a glycosylation site (N-linked (GlcNAc...) asparagine). The EGF-like 6 domain occupies 449-489 (VTDYCQLVRYLCQNGRCIPTPGSYRCECNKGFQLDLRGECI). 15 disulfide bridges follow: cysteine 453/cysteine 465, cysteine 460/cysteine 474, cysteine 476/cysteine 488, cysteine 494/cysteine 504, cysteine 499/cysteine 513, cysteine 515/cysteine 528, cysteine 534/cysteine 546, cysteine 541/cysteine 555, cysteine 557/cysteine 570, cysteine 576/cysteine 587, cysteine 582/cysteine 596, cysteine 598/cysteine 611, cysteine 617/cysteine 628, cysteine 623/cysteine 637, and cysteine 639/cysteine 652. O-linked (Glc) serine glycosylation is present at serine 471. In terms of domain architecture, EGF-like 7; calcium-binding spans 490–529 (DVDECEKNPCAGGECINNQGSYTCQCRAGYQSTLTRTECR). Serine 510 carries an O-linked (Glc) serine glycan. In terms of domain architecture, EGF-like 8; calcium-binding spans 530–571 (DIDECLQNGRICNNGRCINTDGSFHCVCNAGFHVTRDGKNCE). A glycan (O-linked (Glc) serine) is linked at serine 552. One can recognise an EGF-like 9; calcium-binding domain in the interval 572 to 612 (DMDECSIRNMCLNGMCINEDGSFKCICKPGFQLASDGRYCK). A glycan (O-linked (Glc) serine) is linked at serine 593. The 41-residue stretch at 613–653 (DINECETPGICMNGRCVNTDGSYRCECFPGLAVGLDGRVCV) folds into the EGF-like 10; calcium-binding domain. An O-linked (Glc) serine glycan is attached at serine 634. The region spanning 659-711 (STCYGGYKRGQCIKPLFGAVTKSECCCASTEYAFGEPCQPCPAQNSAEYQALC) is the TB 3 domain. The region spanning 723-764 (DINECALDPDICPNGICENLRGTYKCICNSGYEVDSTGKNCV) is the EGF-like 11; calcium-binding domain. 16 disulfides stabilise this stretch: cysteine 727–cysteine 739, cysteine 734–cysteine 748, cysteine 750–cysteine 763, cysteine 769–cysteine 781, cysteine 776–cysteine 790, cysteine 792–cysteine 805, cysteine 811–cysteine 821, cysteine 816–cysteine 830, cysteine 832–cysteine 845, cysteine 853–cysteine 875, cysteine 862–cysteine 887, cysteine 876–cysteine 890, cysteine 896–cysteine 908, cysteine 914–cysteine 926, cysteine 921–cysteine 935, and cysteine 937–cysteine 950. Residues 765–806 (DINECVLNSLLCDNGQCRNTPGSFVCTCPKGFIYKPDLKTCE) enclose the EGF-like 12; calcium-binding domain. A glycan (O-linked (Glc) serine) is linked at serine 787. Positions 807–846 (DIDECESSPCINGVCKNSPGSFICECSSESTLDPTKTICI) constitute an EGF-like 13; calcium-binding domain. O-linked (Glc) serine glycosylation occurs at serine 827. The TB 4 domain maps to 851 to 902 (GTCWQTVIDGRCEININGATLKSQCCSSLGAAWGSPCTLCQVDPICGKGYSR). The hybrid domain 2 stretch occupies residues 862 to 887 (CEININGATLKSQCCSSLGAAWGSPC). An EGF-like 14; calcium-binding domain is found at 910 to 951 (DIDECEVFPGVCKNGLCVNTRGSFKCQCPSGMTLDATGRICL). The 53-residue stretch at 956–1008 (ETCFLRYEDEECTLPIAGRHRMDACCCSVGAAWGTEECEECPMRNTPEYEELC) folds into the TB 5 domain. An EGF-like 15; calcium-binding domain is found at 1028-1069 (DINECKMIPSLCTHGKCRNTIGSFKCRCDSGFALDSEERNCT). Disulfide bonds link cysteine 1032/cysteine 1044, cysteine 1039/cysteine 1053, cysteine 1055/cysteine 1068, cysteine 1074/cysteine 1086, cysteine 1081/cysteine 1095, cysteine 1097/cysteine 1111, cysteine 1117/cysteine 1129, cysteine 1124/cysteine 1138, cysteine 1140/cysteine 1153, cysteine 1159/cysteine 1171, cysteine 1166/cysteine 1180, cysteine 1182/cysteine 1195, cysteine 1201/cysteine 1212, cysteine 1208/cysteine 1221, cysteine 1223/cysteine 1236, cysteine 1242/cysteine 1254, cysteine 1249/cysteine 1263, cysteine 1265/cysteine 1278, cysteine 1284/cysteine 1296, cysteine 1291/cysteine 1305, cysteine 1307/cysteine 1320, cysteine 1326/cysteine 1339, cysteine 1333/cysteine 1348, cysteine 1350/cysteine 1361, cysteine 1367/cysteine 1380, cysteine 1374/cysteine 1389, cysteine 1391/cysteine 1402, cysteine 1408/cysteine 1420, cysteine 1415/cysteine 1429, cysteine 1431/cysteine 1444, cysteine 1450/cysteine 1461, cysteine 1456/cysteine 1470, cysteine 1472/cysteine 1485, cysteine 1491/cysteine 1502, cysteine 1497/cysteine 1511, cysteine 1513/cysteine 1526, cysteine 1534/cysteine 1562, cysteine 1549/cysteine 1574, cysteine 1563/cysteine 1577, cysteine 1564/cysteine 1589, cysteine 1610/cysteine 1622, cysteine 1617/cysteine 1631, cysteine 1633/cysteine 1646, cysteine 1652/cysteine 1663, cysteine 1658/cysteine 1672, and cysteine 1674/cysteine 1687. O-linked (Glc) serine glycosylation occurs at serine 1050. Asparagine 1067 carries N-linked (GlcNAc...) asparagine glycosylation. The 43-residue stretch at 1070-1112 (DIDECRISPDLCGRGQCVNTPGDFECKCDEGYESGFMMMKNCM) folds into the EGF-like 16; calcium-binding domain. Residues 1113–1154 (DIDECQRDPLLCRGGVCHNTEGSYRCECPPGHQLSPNISACI) enclose the EGF-like 17; calcium-binding domain. The O-linked (Glc) serine glycan is linked to serine 1135. N-linked (GlcNAc...) asparagine glycosylation is present at asparagine 1149. One can recognise an EGF-like 18; calcium-binding domain in the interval 1155 to 1196 (DINECELSAHLCPNGRCVNLIGKYQCACNPGYHSTPDRLFCV). The EGF-like 19; calcium-binding domain maps to 1197–1237 (DIDECSIMNGGCETFCTNSEGSYECSCQPGFALMPDQRSCT). The O-linked (Glc) serine glycan is linked to serine 1218. In terms of domain architecture, EGF-like 20; calcium-binding spans 1238 to 1279 (DIDECEDNPNICDGGQCTNIPGEYRCLCYDGFMASEDMKTCV). The EGF-like 21; calcium-binding domain maps to 1280-1321 (DVNECDLNPNICLSGTCENTKGSFICHCDMGYSGKKGKTGCT). Serine 1302 carries O-linked (Glc) serine glycosylation. The region spanning 1322-1362 (DINECEIGAHNCGKHAVCTNTAGSFKCSCSPGWIGDGIKCT) is the EGF-like 22; calcium-binding domain. The O-linked (Glc) serine glycan is linked to serine 1345. The region spanning 1363–1403 (DLDECSNGTHMCSQHADCKNTMGSYRCLCKEGYTGDGFTCT) is the EGF-like 23; calcium-binding domain. Asparagine 1369 carries an N-linked (GlcNAc...) asparagine glycan. Residue serine 1386 is glycosylated (O-linked (Glc) serine). Residues 1404-1445 (DLDECSENLNLCGNGQCLNAPGGYRCECDMGFVPSADGKACE) form the EGF-like 24; calcium-binding domain. The EGF-like 25; calcium-binding domain occupies 1446–1486 (DIDECSLPNICVFGTCHNLPGLFRCECEIGYELDRSGGNCT). N-linked (GlcNAc...) asparagine glycosylation occurs at asparagine 1484. Residues 1487-1527 (DVNECLDPTTCISGNCVNTPGSYICDCPPDFELNPTRVGCV) form the EGF-like 26; calcium-binding domain. Residue serine 1508 is glycosylated (O-linked (Glc) serine). The C-terminal domain stretch occupies residues 1528–2731 (DTRSGNCYLD…GYPKRGRKRR (1204 aa)). In terms of domain architecture, TB 6 spans 1532-1589 (GNCYLDIRPRGDNGDTACSNEIGVGVSKASCCCSLGKAWGTPCEMCPAVNTSEYKILC). The short motif at 1541-1543 (RGD) is the Cell attachment site element. A glycan (N-linked (GlcNAc...) asparagine) is linked at asparagine 1581. One can recognise an EGF-like 27; calcium-binding domain in the interval 1606–1647 (DIDECQELPGLCQGGKCINTFGSFQCRCPTGYYLNEDTRVCD). Serine 1628 is a glycosylation site (O-linked (Glc) serine). An EGF-like 28; calcium-binding domain is found at 1648–1688 (DVNECETPGICGPGTCYNTVGNYTCICPPDYMQVNGGNNCM). N-linked (GlcNAc...) asparagine glycosylation occurs at asparagine 1669. Positions 1693–1748 (SLCYRNYYADNQTCDGELLFNMTKKMCCCSYNIGRAWNKPCEQCPIPSTDEFATLC) constitute a TB 7 domain. Asparagine 1703 and asparagine 1713 each carry an N-linked (GlcNAc...) asparagine glycan. The region spanning 1766–1807 (DIDECREIPGVCENGVCINMVGSFRCECPVGFFYNDKLLVCE) is the EGF-like 29; calcium-binding domain. Disulfide bonds link cysteine 1770–cysteine 1782, cysteine 1777–cysteine 1791, cysteine 1793–cysteine 1806, cysteine 1812–cysteine 1824, cysteine 1818–cysteine 1833, cysteine 1835–cysteine 1847, cysteine 1853–cysteine 1865, cysteine 1860–cysteine 1874, cysteine 1876–cysteine 1889, cysteine 1895–cysteine 1905, cysteine 1900–cysteine 1914, cysteine 1916–cysteine 1928, cysteine 1934–cysteine 1947, cysteine 1942–cysteine 1956, cysteine 1958–cysteine 1971, cysteine 1977–cysteine 1989, cysteine 1984–cysteine 1998, cysteine 2000–cysteine 2011, cysteine 2017–cysteine 2029, cysteine 2024–cysteine 2038, cysteine 2040–cysteine 2053, cysteine 2061–cysteine 2083, cysteine 2070–cysteine 2096, cysteine 2084–cysteine 2099, cysteine 2085–cysteine 2111, cysteine 2131–cysteine 2142, cysteine 2137–cysteine 2151, cysteine 2153–cysteine 2164, cysteine 2170–cysteine 2181, cysteine 2176–cysteine 2190, cysteine 2192–cysteine 2204, cysteine 2210–cysteine 2221, cysteine 2217–cysteine 2230, cysteine 2232–cysteine 2245, cysteine 2251–cysteine 2265, cysteine 2258–cysteine 2274, cysteine 2276–cysteine 2289, cysteine 2295–cysteine 2307, cysteine 2302–cysteine 2316, and cysteine 2318–cysteine 2331. In terms of domain architecture, EGF-like 30; calcium-binding spans 1808-1848 (DIDECQNGPVCQRNAECINTAGSYRCDCKPGYRFTSTGQCN). An O-linked (Glc) serine glycan is attached at serine 1830. One can recognise an EGF-like 31; calcium-binding domain in the interval 1849 to 1890 (DRNECQEIPNICSHGQCIDTVGSFYCLCHTGFKTNDDQTMCL). Serine 1871 is a glycosylation site (O-linked (Glc) serine). Residues 1891-1929 (DINECERDACGNGTCRNTIGSFNCRCNHGFILSHNNDCI) enclose the EGF-like 32; calcium-binding domain. Asparagine 1902 carries N-linked (GlcNAc...) asparagine glycosylation. The O-linked (Glc) serine glycan is linked to serine 1911. The 43-residue stretch at 1930–1972 (DVDECASGNGNLCRNGQCINTVGSFQCQCNEGYEVAPDGRTCV) folds into the EGF-like 33; calcium-binding domain. Residue serine 1953 is glycosylated (O-linked (Glc) serine). The EGF-like 34; calcium-binding domain occupies 1973–2012 (DINECLLEPRKCAPGTCQNLDGSYRCICPPGYSLQNEKCE). Residues 2013-2054 (DIDECVEEPEICALGTCSNTEGSFKCLCPEGFSLSSSGRRCQ) form the EGF-like 35; calcium-binding domain. Serine 2035 carries O-linked (Glc) serine glycosylation. One can recognise a TB 8 domain in the interval 2059-2111 (SYCYAKFEGGKCSSPKSRNHSKQECCCALKGEGWGDPCELCPTEPDEAFRQIC). Residue asparagine 2077 is glycosylated (N-linked (GlcNAc...) asparagine). In terms of domain architecture, EGF-like 36; calcium-binding spans 2127-2165 (DMDECKEPDVCKHGQCINTDGSYRCECPFGYILAGNECV). Serine 2148 is a glycosylation site (O-linked (Glc) serine). Positions 2166–2205 (DTDECSVGNPCGNGTCKNVIGGFECTCEEGFEPGPMMTCE) constitute an EGF-like 37; calcium-binding domain. Residue asparagine 2178 is glycosylated (N-linked (GlcNAc...) asparagine). The EGF-like 38; calcium-binding domain occupies 2206–2246 (DINECAQNPLLCAFRCVNTYGSYECKCPVGYVLREDRRMCK). Serine 2227 carries O-linked (Glc) serine glycosylation. The EGF-like 39; calcium-binding domain maps to 2247 to 2290 (DEDECEEGKHDCTEKQMECKNLIGTYMCICGPGYQRRPDGEGCV). Residues 2291 to 2332 (DENECQTKPGICENGRCLNTRGSYTCECNDGFTASPNQDECL) form the EGF-like 40; calcium-binding domain. O-linked (Glc) serine glycosylation is present at serine 2313. Positions 2337–2390 (GYCFTEVLQNMCQIGSSNRNPVTKSECCCDGGRGWGPHCEICPFQGTVAFKKLC) constitute a TB 9 domain. Positions 2402-2443 (DIDECKVIHDVCRNGECVNDRGSYHCICKTGYTPDITGTSCV) constitute an EGF-like 41; calcium-binding domain. 21 disulfide bridges follow: cysteine 2406–cysteine 2418, cysteine 2413–cysteine 2427, cysteine 2429–cysteine 2442, cysteine 2448–cysteine 2459, cysteine 2455–cysteine 2468, cysteine 2470–cysteine 2483, cysteine 2489–cysteine 2500, cysteine 2496–cysteine 2509, cysteine 2511–cysteine 2522, cysteine 2528–cysteine 2541, cysteine 2535–cysteine 2550, cysteine 2552–cysteine 2565, cysteine 2571–cysteine 2581, cysteine 2577–cysteine 2590, cysteine 2592–cysteine 2605, cysteine 2611–cysteine 2622, cysteine 2617–cysteine 2631, cysteine 2633–cysteine 2646, cysteine 2652–cysteine 2663, cysteine 2659–cysteine 2672, and cysteine 2674–cysteine 2686. The EGF-like 42; calcium-binding domain maps to 2444 to 2484 (DLNECNQAPKPCNFICKNTEGSYQCSCPKGYILQEDGRSCK). Residue serine 2465 is glycosylated (O-linked (Glc) serine). One can recognise an EGF-like 43; calcium-binding domain in the interval 2485 to 2523 (DLDECATKQHNCQFLCVNTIGGFTCKCPPGFTQHHTSCI). The EGF-like 44; calcium-binding domain occupies 2524–2566 (DNNECTSDINLCGSKGICQNTPGSFTCECQRGFSLDQTGSSCE). Residue serine 2547 is glycosylated (O-linked (Glc) serine). Residues 2567-2606 (DVDECEGNHRCQHGCQNIIGGYRCSCPQGYLQHYQWNQCV) enclose the EGF-like 45; calcium-binding domain. One can recognise an EGF-like 46; calcium-binding domain in the interval 2607 to 2647 (DENECLSAHICGGASCHNTLGSYKCMCPAGFQYEQFSGGCQ). Serine 2628 is a glycosylation site (O-linked (Glc) serine). The EGF-like 47; calcium-binding domain maps to 2648–2687 (DINECGSAQAPCSYGCSNTEGGYLCGCPPGYFRIGQGHCV). A Phosphoserine; by FAM20C modification is found at serine 2702. Residue serine 2709 is modified to Phosphoserine. Residues 2726–2746 (RGRKRRSTNETDASNIEDQSE) are disordered. A glycan (N-linked (GlcNAc...) asparagine) is linked at asparagine 2734. Polar residues predominate over residues 2735 to 2746 (ETDASNIEDQSE). N-linked (GlcNAc...) asparagine glycosylation is found at asparagine 2750 and asparagine 2767.

The protein belongs to the fibrillin family. In terms of assembly, interacts with COL16A1. Interacts with integrin alpha-V/beta-3. Interacts with ADAMTS10; this interaction promotes microfibril assembly. Interacts with THSD4; this interaction promotes fibril formation. Interacts (via N-terminal domain) with FBLN2 and FBLN5. Interacts with ELN. Forms a ternary complex with ELN and FBLN2 or FBLN5 and a significant interaction with ELN seen only in the presence of FBLN2 or FBLN5. Interacts (via N-terminal domain) with LTBP2 (via C-terminal domain) in a Ca(+2)-dependent manner. Interacts (via N-terminal domain) with LTBP1 (via C-terminal domain). Interacts with integrins ITGA5:ITGB1, ITGAV:ITGB3 and ITGAV:ITGB6. Interacts (via N-terminal domain) with BMP2, BMP4, BMP7, BMP10 and GDF5. Interacts (via N-terminal domain) with MFAP2 and MFAP5. Interacts with ADAMTSL5. Interacts with MFAP4. Interacts (via N-terminal domain) with TNFSF11 in a Ca(+2)-dependent manner. Interacts (via N-terminal domain) with EFEMP2; this interaction inhibits EFEMP2 binding to LOX and ELN. In terms of processing, cleavage of N- and C-terminus by furin is required for incorporation into the extracellular matrix and assembly into microfibrils. The C-terminus, which corresponds to the Asprosin chain, was initially thought to constitute a propeptide. Fibrillin-1 and Asprosin chains are still linked together during the secretion from cells, but are subsequently separated by furin, an essential step for incorporation of Fibrillin-1 into the nascent microfibrils. Forms intermolecular disulfide bonds either with other fibrillin-1 molecules or with other components of the microfibrils. Post-translationally, O-glycosylated on serine residues by POGLUT2 and POGLUT3 which is necessary for efficient protein secretion.

The protein localises to the secreted. It localises to the extracellular space. The protein resides in the extracellular matrix. Its function is as follows. Structural component of the 10-12 nm diameter microfibrils of the extracellular matrix, which conveys both structural and regulatory properties to load-bearing connective tissues. Fibrillin-1-containing microfibrils provide long-term force bearing structural support. In tissues such as the lung, blood vessels and skin, microfibrils form the periphery of the elastic fiber, acting as a scaffold for the deposition of elastin. In addition, microfibrils can occur as elastin-independent networks in tissues such as the ciliary zonule, tendon, cornea and glomerulus where they provide tensile strength and have anchoring roles. Fibrillin-1 also plays a key role in tissue homeostasis through specific interactions with growth factors, such as the bone morphogenetic proteins (BMPs), growth and differentiation factors (GDFs) and latent transforming growth factor-beta-binding proteins (LTBPs), cell-surface integrins and other extracellular matrix protein and proteoglycan components. Regulates osteoblast maturation by controlling TGF-beta bioavailability and calibrating TGF-beta and BMP levels, respectively. Negatively regulates osteoclastogenesis by binding and sequestering an osteoclast differentiation and activation factor TNFSF11. This leads to disruption of TNFSF11-induced Ca(2+) signaling and impairment of TNFSF11-mediated nuclear translocation and activation of transcription factor NFATC1 which regulates genes important for osteoclast differentiation and function. Mediates cell adhesion via its binding to cell surface receptors integrins ITGAV:ITGB3 and ITGA5:ITGB1. Binds heparin and this interaction has an important role in the assembly of microfibrils. In terms of biological role, adipokine secreted by white adipose tissue that plays an important regulatory role in the glucose metabolism of liver, muscle and pancreas. Hormone that targets the liver in response to fasting to increase plasma glucose levels. Binds the olfactory receptor OR4M1 at the surface of hepatocytes and promotes hepatocyte glucose release by activating the protein kinase A activity in the liver, resulting in rapid glucose release into the circulation. May act as a regulator of adaptive thermogenesis by inhibiting browning and energy consumption, while increasing lipid deposition in white adipose tissue. Also acts as an orexigenic hormone that increases appetite: crosses the blood brain barrier and exerts effects on the hypothalamus. In the arcuate nucleus of the hypothalamus, asprosin directly activates orexigenic AgRP neurons and indirectly inhibits anorexigenic POMC neurons, resulting in appetite stimulation. Activates orexigenic AgRP neurons via binding to the olfactory receptor OR4M1. May also play a role in sperm motility in testis via interaction with OR4M1 receptor. This chain is Fibrillin-1, found in Homo sapiens (Human).